A 345-amino-acid polypeptide reads, in one-letter code: rRNA 2'-O-methyltransferase fibrillarin (345 aa).

Residues 1–114 are disordered; that stretch reads MGKPGFSPRG…GFKGGKTVTI (114 aa). Positions 8-108 are enriched in gly residues; it reads PRGGGGGGGG…RGGGAGGFKG (101 aa). An asymmetric dimethylarginine mark is found at arginine 9, arginine 23, arginine 25, arginine 41, arginine 43, arginine 49, arginine 52, arginine 59, arginine 64, arginine 72, arginine 78, arginine 84, arginine 89, arginine 94, and arginine 99. S-adenosyl-L-methionine-binding positions include 198 to 199, 217 to 218, 242 to 243, and 262 to 265; these read TT, EF, DA, and DVAQ.

Belongs to the methyltransferase superfamily. Fibrillarin family. As to quaternary structure, component of box C/D small nucleolar ribonucleoprotein (snoRNP) particles. It is associated with the U3, U8 and U13 small nuclear RNAs. In terms of processing, by homology to other fibrillarins, some or all of the N-terminal domain arginines are modified to asymmetric dimethylarginine (DMA).

It localises to the nucleus. The protein resides in the nucleolus. The enzyme catalyses L-glutaminyl-[histone H2A] + S-adenosyl-L-methionine = N(5)-methyl-L-glutaminyl-[histone H2A] + S-adenosyl-L-homocysteine + H(+). In terms of biological role, S-adenosyl-L-methionine-dependent methyltransferase that has the ability to methylate both RNAs and proteins. Involved in pre-rRNA processing. Utilizes the methyl donor S-adenosyl-L-methionine to catalyze the site-specific 2'-hydroxyl methylation of ribose moieties in pre-ribosomal RNA. Site specificity is provided by a guide RNA that base pairs with the substrate. Methylation occurs at a characteristic distance from the sequence involved in base pairing with the guide RNA. Also acts as a protein methyltransferase by mediating methylation of 'Gln-105' of histone H2A (H2AQ105me), a modification that impairs binding of the FACT complex and is specifically present at 35S ribosomal DNA locus. The sequence is that of rRNA 2'-O-methyltransferase fibrillarin from Drosophila erecta (Fruit fly).